The primary structure comprises 473 residues: Presenilin-B (473 aa).

The interval M1 to D141 is disordered. At M1–S164 the chain is on the cytoplasmic side. Residues R22–T46 show a composition bias toward polar residues. A compositionally biased stretch (low complexity) spans N54–Y72. Over residues V79–D89 the composition is skewed to basic and acidic residues. Residues S165 to V185 traverse the membrane as a helical segment. The Lumenal portion of the chain corresponds to K186–S224. An N-linked (GlcNAc...) asparagine glycan is attached at N190. A helical membrane pass occupies residues L225 to L245. Residues Y246 to K252 are Cytoplasmic-facing. A helical transmembrane segment spans residues I253 to F273. Residues F274–D286 are Lumenal-facing. A helical membrane pass occupies residues Y287 to W307. A topological domain (cytoplasmic) is located at residue Y308. The helical transmembrane segment at A309–L329 threads the bilayer. The Lumenal segment spans residues T330 to Q334. The chain crosses the membrane as a helical span at residues W335–P355. D348 is an active-site residue. The Cytoplasmic segment spans residues R356–K389. The helical transmembrane segment at L390 to M410 threads the bilayer. Residue D394 is part of the active site. Over S411 to V413 the chain is Lumenal. Residues F414–F434 form a helical membrane-spanning segment. Residues K435–P442 lie on the Cytoplasmic side of the membrane. A PAL motif is present at residues P439–L441. Residues I443–I463 constitute an intramembrane region (helical). Residues E464 to V473 are Cytoplasmic-facing.

It belongs to the peptidase A22A family. Homodimer. Component of the gamma-secretase complex, a complex composed of a presenilin homodimer, nicastrin, aph1 and pen2.

Its subcellular location is the endoplasmic reticulum membrane. It is found in the golgi apparatus membrane. In terms of biological role, probable catalytic subunit of the gamma-secretase complex, an endoprotease complex that catalyzes the intramembrane cleavage of integral membrane proteins such as Notch receptors. Requires the other members of the gamma-secretase complex to have a protease activity. This chain is Presenilin-B (psenB), found in Dictyostelium discoideum (Social amoeba).